The following is a 413-amino-acid chain: Histidine--tRNA ligase (413 aa).

Belongs to the class-II aminoacyl-tRNA synthetase family. As to quaternary structure, homodimer.

The protein resides in the cytoplasm. It carries out the reaction tRNA(His) + L-histidine + ATP = L-histidyl-tRNA(His) + AMP + diphosphate + H(+). This Fusobacterium nucleatum subsp. nucleatum (strain ATCC 25586 / DSM 15643 / BCRC 10681 / CIP 101130 / JCM 8532 / KCTC 2640 / LMG 13131 / VPI 4355) protein is Histidine--tRNA ligase.